The following is a 301-amino-acid chain: MQLMDLRKQGIDIQENIPLSRFTFTKTGGPAQYLAFPKNLNELELLVDTVKENNIPLTVIGNASNLIIRDGGISGLVLILTKMDTIVANKDEATVTADAGARIIDTSEAACEAGLSGLEFAAGIPGSVGGAVFMNAGAYGGETEFVIKSVRVLTRAGEFKTYTHDEMEFGYRHSLVQETGDIVVSATFGLEPGDKWAIKAKMEYFNGLRRAKQPLEYPSCGSVFKRPAGHFVGPMIIKAGLQGKRIGGAEDSMKHAGFIVNVGGATATDYLDLIHLIQKTIKKDFGIDLQTEVRIIGKEKD.

Positions 26-193 (KTGGPAQYLA…VSATFGLEPG (168 aa)) constitute an FAD-binding PCMH-type domain. R172 is an active-site residue. S222 (proton donor) is an active-site residue. The active site involves E292.

Belongs to the MurB family. FAD serves as cofactor.

It is found in the cytoplasm. The catalysed reaction is UDP-N-acetyl-alpha-D-muramate + NADP(+) = UDP-N-acetyl-3-O-(1-carboxyvinyl)-alpha-D-glucosamine + NADPH + H(+). The protein operates within cell wall biogenesis; peptidoglycan biosynthesis. Functionally, cell wall formation. This is UDP-N-acetylenolpyruvoylglucosamine reductase from Lactobacillus johnsonii (strain CNCM I-12250 / La1 / NCC 533).